Here is a 544-residue protein sequence, read N- to C-terminus: MDKKALLALVLSAAVLLIYQIFIYKTTPPPKPVNENKSNTVVVNPAAPVSPQTPADEPSSGSAANPETAAALPVDGTEKEQEITVDTPLYQAVFTTKGGALKSFALKNYRETLAVNSKPIELVDVKEAMPYPLGISFPASSVDVSPASFFKADVPAIDLKSTSESRRLTFVQTWPGKIKIEKIYTFNPGKYAIDLEIRTYNLSEVPLSQEIALFWNQYVDPSAKEDSYGHTGPVSYVAKDVEREKVTKMETPKSLGPDVSWGGFESKYFIAAMIPQNPSLTSLSLSKDSSNMVSTSLKGPKNIIPPGQAGFFTYKLFLGPKDYNILKAQGVGLENAIDFGSWLKWLAMPLLLSLKFLYNYVHNYGIAIIILTILIKILFWPLGNKSYKSMKEMQKLQPKMLELREKYKNDKARLSQETMALYKAYKVNPMGGCLPMIIQIPVFFGLYKALLYAIELRHSPFFLWIQDLSAKDPYYITPIIMGATMFLQQKMTPVSGDPTQAKIMLWMPVIFTFMFLNFPSGLVIYWLFNNILSIGQQYYINKQA.

Residues K4–Y24 form a helical membrane-spanning segment. Residues N44 to E78 form a disordered region. A run of 3 helical transmembrane segments spans residues N363–G383, L434–I454, and P508–F528.

It belongs to the OXA1/ALB3/YidC family. Type 1 subfamily. As to quaternary structure, interacts with the Sec translocase complex via SecD. Specifically interacts with transmembrane segments of nascent integral membrane proteins during membrane integration.

The protein localises to the cell inner membrane. Required for the insertion and/or proper folding and/or complex formation of integral membrane proteins into the membrane. Involved in integration of membrane proteins that insert both dependently and independently of the Sec translocase complex, as well as at least some lipoproteins. Aids folding of multispanning membrane proteins. The polypeptide is Membrane protein insertase YidC (Syntrophus aciditrophicus (strain SB)).